The primary structure comprises 326 residues: Methionyl-tRNA formyltransferase (326 aa).

110–113 (SLLP) lines the (6S)-5,6,7,8-tetrahydrofolate pocket. Residues 307 to 326 (VGTRFSPPEAPQREPAPGEA) form a disordered region.

This sequence belongs to the Fmt family.

The catalysed reaction is L-methionyl-tRNA(fMet) + (6R)-10-formyltetrahydrofolate = N-formyl-L-methionyl-tRNA(fMet) + (6S)-5,6,7,8-tetrahydrofolate + H(+). Functionally, attaches a formyl group to the free amino group of methionyl-tRNA(fMet). The formyl group appears to play a dual role in the initiator identity of N-formylmethionyl-tRNA by promoting its recognition by IF2 and preventing the misappropriation of this tRNA by the elongation apparatus. This is Methionyl-tRNA formyltransferase from Symbiobacterium thermophilum (strain DSM 24528 / JCM 14929 / IAM 14863 / T).